A 1273-amino-acid chain; its full sequence is Ribulose bisphosphate carboxylase small subunit, chloroplastic (1273 aa).

The N-terminal 134 residues, 1–134 (MPFDRQPLLS…AVLPFTSEKD (134 aa)), are a transit peptide targeting the chloroplast. 7 propeptides span residues 269–278 (GMAAMTGEKD), 412–421 (GMAAMTGEKD), 556–565 (GMAAMTGEKD), 699–708 (GMAAMTGEKD), 844–853 (GMAAMTGEKE), 987–996 (GMAAMTGEKD), and 1131–1140 (GMAAMTGEKE).

It belongs to the RuBisCO small chain family. In terms of assembly, heterohexadecamer of 8 large and 8 small subunits. In terms of processing, eight small subunits are processed from a large polyprotein. All start with the same sequence but there is more heterogeneity at the C-terminus.

The protein resides in the plastid. It localises to the chloroplast. Functionally, ruBisCO catalyzes two reactions: the carboxylation of D-ribulose 1,5-bisphosphate, the primary event in carbon dioxide fixation, as well as the oxidative fragmentation of the pentose substrate. Both reactions occur simultaneously and in competition at the same active site. Although the small subunit is not catalytic it is essential for maximal activity. This chain is Ribulose bisphosphate carboxylase small subunit, chloroplastic, found in Euglena gracilis.